The chain runs to 166 residues: Holin-like protein TcdE (166 aa).

The next 4 membrane-spanning stretches (helical) occupy residues isoleucine 15–histidine 35, isoleucine 36–alanine 56, methionine 77–phenylalanine 97, and histidine 111–leucine 131.

Belongs to the bacteriophage holin family. As to quaternary structure, homomultimer.

The protein resides in the cell membrane. Its function is as follows. Holin-like protein required for secretion of toxins A and B (TcdA and TcdB). Facilitates the release of toxins to the extracellular environment without causing the bacterial cell lysis. In terms of biological role, has weak activity, suggesting that it may act as a antiholin when multiple forms are produced. The polypeptide is Holin-like protein TcdE (Clostridioides difficile (Peptoclostridium difficile)).